A 189-amino-acid chain; its full sequence is Peptidyl-tRNA hydrolase (189 aa).

Residue Tyr-15 participates in tRNA binding. Catalysis depends on His-20, which acts as the Proton acceptor. Positions 67, 69, and 115 each coordinate tRNA.

The protein belongs to the PTH family. In terms of assembly, monomer.

It is found in the cytoplasm. The catalysed reaction is an N-acyl-L-alpha-aminoacyl-tRNA + H2O = an N-acyl-L-amino acid + a tRNA + H(+). Its function is as follows. Hydrolyzes ribosome-free peptidyl-tRNAs (with 1 or more amino acids incorporated), which drop off the ribosome during protein synthesis, or as a result of ribosome stalling. Catalyzes the release of premature peptidyl moieties from peptidyl-tRNA molecules trapped in stalled 50S ribosomal subunits, and thus maintains levels of free tRNAs and 50S ribosomes. In Symbiobacterium thermophilum (strain DSM 24528 / JCM 14929 / IAM 14863 / T), this protein is Peptidyl-tRNA hydrolase.